A 239-amino-acid polypeptide reads, in one-letter code: Ubiquinone biosynthesis O-methyltransferase (239 aa).

Residues arginine 42, glycine 62, aspartate 83, and methionine 127 each coordinate S-adenosyl-L-methionine.

Belongs to the methyltransferase superfamily. UbiG/COQ3 family.

The catalysed reaction is a 3-demethylubiquinol + S-adenosyl-L-methionine = a ubiquinol + S-adenosyl-L-homocysteine + H(+). It carries out the reaction a 3-(all-trans-polyprenyl)benzene-1,2-diol + S-adenosyl-L-methionine = a 2-methoxy-6-(all-trans-polyprenyl)phenol + S-adenosyl-L-homocysteine + H(+). The protein operates within cofactor biosynthesis; ubiquinone biosynthesis. Functionally, O-methyltransferase that catalyzes the 2 O-methylation steps in the ubiquinone biosynthetic pathway. The chain is Ubiquinone biosynthesis O-methyltransferase from Pectobacterium carotovorum subsp. carotovorum (strain PC1).